The following is a 136-amino-acid chain: Small ribosomal subunit protein uS12 (136 aa).

Residues 1–28 form a disordered region; it reads MPTIQQLIRSERQELKKKTKSPALKSCP. Residue aspartate 89 is modified to 3-methylthioaspartic acid. The interval 101–136 is disordered; sequence TLDTAGVKDRKQGRSKYGAKRPKPGAASTASTGKKR. The segment covering 113–123 has biased composition (basic residues); it reads GRSKYGAKRPK.

Belongs to the universal ribosomal protein uS12 family. As to quaternary structure, part of the 30S ribosomal subunit. Contacts proteins S8 and S17. May interact with IF1 in the 30S initiation complex.

In terms of biological role, with S4 and S5 plays an important role in translational accuracy. Functionally, interacts with and stabilizes bases of the 16S rRNA that are involved in tRNA selection in the A site and with the mRNA backbone. Located at the interface of the 30S and 50S subunits, it traverses the body of the 30S subunit contacting proteins on the other side and probably holding the rRNA structure together. The combined cluster of proteins S8, S12 and S17 appears to hold together the shoulder and platform of the 30S subunit. This chain is Small ribosomal subunit protein uS12, found in Cyanothece sp. (strain PCC 7425 / ATCC 29141).